Here is a 381-residue protein sequence, read N- to C-terminus: E3 ubiquitin-protein ligase RNF133 (381 aa).

One can recognise a PA domain in the interval 65–167 (SSILKRVAGV…VKGMEILHLI (103 aa)). A helical transmembrane segment spans residues 186 to 208 (WLNHYFVSFMIVTTATLAYFTFY). An RING-type; atypical zinc finger spans residues 256–297 (CVICFEAYKPNEIVRILTCKHFFHKNCIDPWILAHGTCPMCK). Residues 340–381 (LPPARTSSKVTHVQEHPTSVNVGSQPPEAEETGHPSFGQHDL) are disordered. Over residues 344–363 (RTSSKVTHVQEHPTSVNVGS) the composition is skewed to polar residues.

As to quaternary structure, interacts with E3 ligase UBE2J1. In terms of processing, auto-ubiquitinated.

The protein resides in the endoplasmic reticulum membrane. The catalysed reaction is S-ubiquitinyl-[E2 ubiquitin-conjugating enzyme]-L-cysteine + [acceptor protein]-L-lysine = [E2 ubiquitin-conjugating enzyme]-L-cysteine + N(6)-ubiquitinyl-[acceptor protein]-L-lysine.. It participates in protein modification; protein ubiquitination. Its function is as follows. Has E3 ubiquitin-protein ligase activity. Plays a role in male fecundity through the interaction with the E2 ubituitin-protein ligase UBE2J1. This chain is E3 ubiquitin-protein ligase RNF133 (Rnf133), found in Rattus norvegicus (Rat).